Here is a 464-residue protein sequence, read N- to C-terminus: Multifunctional dye peroxidase DyP2 (464 aa).

Aspartate 203 functions as the Proton acceptor in the catalytic mechanism. Mn(2+) contacts are provided by glutamate 258, glutamate 273, and glutamate 284. Residue histidine 321 coordinates heme.

The protein belongs to the DyP-type peroxidase family. Exists both as a monomeric and oligomeric species in solution; the monomeric form contains no bound heme cofactor and is inactive. Heme b is required as a cofactor. Requires Mn(2+) as cofactor.

It localises to the secreted. The enzyme catalyses 1-(4-hydroxy-3-methoxyphenyl)-2-(2-methoxyphenoxy)propane-1,3-diol + H2O2 = guaiacol + vanillin + glycolaldehyde + H2O. It carries out the reaction 2 Mn(2+) + H2O2 + 2 H(+) = 2 Mn(3+) + 2 H2O. The catalysed reaction is 2 a phenolic donor + H2O2 = 2 a phenolic radical donor + 2 H2O. It catalyses the reaction Reactive Blue 5 + 2 H2O2 = 2,2'-disulfonyl azobenzene + 3-[(4-amino-6-chloro-1,3,5-triazin-2-yl)amino]benzenesulfonate + phthalate + 2 H2O + 2 H(+). Functionally, displays both high peroxidase and manganese peroxidase activity. Is likely involved in lignin degradation. Also has a Mn-dependent oxidase mode of action that expands its substrate scope in vitro; is thus able to catalyze the O(2)- and Mn-dependent oxidative decarboxylation of 4-methoxymandelate to anisaldehyde. This chain is Multifunctional dye peroxidase DyP2, found in Amycolatopsis sp. (strain ATCC 39116 / 75iv2).